Here is a 159-residue protein sequence, read N- to C-terminus: Ornithine decarboxylase antizyme (159 aa).

The protein belongs to the ODC antizyme family. In terms of assembly, interacts with ODC1 and thereby sterically blocks ODC homodimerization.

Its function is as follows. Ornithine decarboxylase (ODC) antizyme protein that negatively regulates ODC activity and intracellular polyamine biosynthesis and uptake in response to increased intracellular polyamine levels. Binds to ODC monomers, inhibiting the assembly of the functional ODC homodimer, and targets the monomers for ubiquitin-independent proteolytic destruction by the 26S proteasome. This is Ornithine decarboxylase antizyme from Caenorhabditis elegans.